The following is a 95-amino-acid chain: Small ribosomal subunit protein bS21 (95 aa).

A disordered region spans residues 56–95 (KLARKKMQREGLLPMKPKPVFGAGPGAGRGGPAAGPRGPR). The segment covering 78–88 (AGPGAGRGGPA) has biased composition (gly residues).

Belongs to the bacterial ribosomal protein bS21 family.

This Nitrobacter winogradskyi (strain ATCC 25391 / DSM 10237 / CIP 104748 / NCIMB 11846 / Nb-255) protein is Small ribosomal subunit protein bS21.